A 198-amino-acid chain; its full sequence is Imidazoleglycerol-phosphate dehydratase (198 aa).

The protein belongs to the imidazoleglycerol-phosphate dehydratase family.

The protein localises to the cytoplasm. It catalyses the reaction D-erythro-1-(imidazol-4-yl)glycerol 3-phosphate = 3-(imidazol-4-yl)-2-oxopropyl phosphate + H2O. The protein operates within amino-acid biosynthesis; L-histidine biosynthesis; L-histidine from 5-phospho-alpha-D-ribose 1-diphosphate: step 6/9. The sequence is that of Imidazoleglycerol-phosphate dehydratase from Magnetococcus marinus (strain ATCC BAA-1437 / JCM 17883 / MC-1).